Consider the following 157-residue polypeptide: Endoribonuclease YbeY (157 aa).

Zn(2+) is bound by residues H114, H118, and H124.

The protein belongs to the endoribonuclease YbeY family. Zn(2+) is required as a cofactor.

Its subcellular location is the cytoplasm. In terms of biological role, single strand-specific metallo-endoribonuclease involved in late-stage 70S ribosome quality control and in maturation of the 3' terminus of the 16S rRNA. In Salmonella typhimurium (strain LT2 / SGSC1412 / ATCC 700720), this protein is Endoribonuclease YbeY.